Here is a 340-residue protein sequence, read N- to C-terminus: Undecaprenyl-phosphate 4-deoxy-4-formamido-L-arabinose transferase (340 aa).

2 helical membrane passes run 235 to 255 (LSIVGFAMAGLGVLFAAALIF) and 269 to 289 (LFVLFAVLFVFTGGQFIGMGL).

This sequence belongs to the glycosyltransferase 2 family.

Its subcellular location is the cell inner membrane. It carries out the reaction UDP-4-deoxy-4-formamido-beta-L-arabinose + di-trans,octa-cis-undecaprenyl phosphate = 4-deoxy-4-formamido-alpha-L-arabinopyranosyl di-trans,octa-cis-undecaprenyl phosphate + UDP. The protein operates within glycolipid biosynthesis; 4-amino-4-deoxy-alpha-L-arabinose undecaprenyl phosphate biosynthesis; 4-amino-4-deoxy-alpha-L-arabinose undecaprenyl phosphate from UDP-4-deoxy-4-formamido-beta-L-arabinose and undecaprenyl phosphate: step 1/2. It functions in the pathway bacterial outer membrane biogenesis; lipopolysaccharide biosynthesis. Its function is as follows. Catalyzes the transfer of 4-deoxy-4-formamido-L-arabinose from UDP to undecaprenyl phosphate. The modified arabinose is attached to lipid A and is required for resistance to polymyxin and cationic antimicrobial peptides. This chain is Undecaprenyl-phosphate 4-deoxy-4-formamido-L-arabinose transferase, found in Pseudomonas fluorescens (strain Pf0-1).